Reading from the N-terminus, the 567-residue chain is Serine/threonine-protein kinase SSN3 (567 aa).

The region spanning 68 to 470 (YEIIGYIAAG…AINALDHSYF (403 aa)) is the Protein kinase domain. An ATP-binding site is contributed by 74–82 (IAAGTYGKV). Residues 88-179 (RQSSKSSSST…RNSENTDNRR (92 aa)) are disordered. Low complexity predominate over residues 90 to 101 (SSKSSSSTGSDS). Composition is skewed to polar residues over residues 102–122 (LAQD…QNAG) and 133–150 (PNSN…ELST). Residues 167–179 (GDKRNSENTDNRR) show a composition bias toward basic and acidic residues. K190 lines the ATP pocket. The active-site Proton acceptor is D293. Low complexity predominate over residues 546–556 (AVSGNSSSQSS). The disordered stretch occupies residues 546 to 567 (AVSGNSSSQSSRNMEPMKKKRK).

It belongs to the protein kinase superfamily. CMGC Ser/Thr protein kinase family. CDC2/CDKX subfamily. Component of the SRB8-11 complex, a regulatory module of the Mediator complex. It depends on Mg(2+) as a cofactor.

The protein localises to the nucleus. It carries out the reaction L-seryl-[protein] + ATP = O-phospho-L-seryl-[protein] + ADP + H(+). The catalysed reaction is L-threonyl-[protein] + ATP = O-phospho-L-threonyl-[protein] + ADP + H(+). The enzyme catalyses [DNA-directed RNA polymerase] + ATP = phospho-[DNA-directed RNA polymerase] + ADP + H(+). Its function is as follows. Component of the SRB8-11 complex. The SRB8-11 complex is a regulatory module of the Mediator complex which is itself involved in regulation of basal and activated RNA polymerase II-dependent transcription. The SRB8-11 complex may be involved in the transcriptional repression of a subset of genes regulated by Mediator. It may inhibit the association of the Mediator complex with RNA polymerase II to form the holoenzyme complex. The SRB8-11 complex phosphorylates the C-terminal domain (CTD) of the largest subunit of RNA polymerase II. In Candida glabrata (strain ATCC 2001 / BCRC 20586 / JCM 3761 / NBRC 0622 / NRRL Y-65 / CBS 138) (Yeast), this protein is Serine/threonine-protein kinase SSN3 (SSN3).